Reading from the N-terminus, the 353-residue chain is ATPase GET3A (353 aa).

27 to 34 is a binding site for ATP; sequence KGGVGKTT. Residue Asp56 is part of the active site. Positions 226 and 253 each coordinate ATP. A coiled-coil region spans residues 320–353; it reads TTSRSNVEELERKVHTLRLQLKTAEEELERVKSG.

This sequence belongs to the arsA ATPase family. In terms of assembly, homodimer. Interacts with GET1 and GET4.

The protein localises to the cytoplasm. It localises to the cytosol. Its subcellular location is the endoplasmic reticulum. It catalyses the reaction ATP + H2O = ADP + phosphate + H(+). In terms of biological role, ATPase required for the post-translational delivery of tail-anchored (TA) proteins to the endoplasmic reticulum. Recognizes and selectively binds the transmembrane domain of TA proteins in the cytosol. This complex then targets to the endoplasmic reticulum by membrane-bound receptors, where the tail-anchored protein is released for insertion. This process is regulated by ATP binding and hydrolysis. ATP binding drives the homodimer towards the closed dimer state, facilitating recognition of newly synthesized TA membrane proteins. ATP hydrolysis is required for insertion. Subsequently, the homodimer reverts towards the open dimer state, lowering its affinity for the membrane-bound receptor, and returning it to the cytosol to initiate a new round of targeting. Involved in the control of root hair growth through the regulation of syntaxin SYP123 expression. The sequence is that of ATPase GET3A from Arabidopsis thaliana (Mouse-ear cress).